Consider the following 300-residue polypeptide: Acetylglutamate kinase (300 aa).

Residues 73-74 (GG), Arg-95, and Asn-197 each bind substrate.

This sequence belongs to the acetylglutamate kinase family. ArgB subfamily.

The protein resides in the cytoplasm. It carries out the reaction N-acetyl-L-glutamate + ATP = N-acetyl-L-glutamyl 5-phosphate + ADP. It functions in the pathway amino-acid biosynthesis; L-arginine biosynthesis; N(2)-acetyl-L-ornithine from L-glutamate: step 2/4. Functionally, catalyzes the ATP-dependent phosphorylation of N-acetyl-L-glutamate. This is Acetylglutamate kinase from Polynucleobacter necessarius subsp. necessarius (strain STIR1).